The primary structure comprises 134 residues: Phosphomevalonate dehydratase small subunit (134 aa).

Serine 62 functions as the Proton acceptor in the catalytic mechanism.

Belongs to the AcnX type II small subunit family. In terms of assembly, heterodimer composed of a large subunit (PMDh-L) and a small subunit (PMDh-S).

The catalysed reaction is (R)-5-phosphomevalonate = (2E)-3-methyl-5-phosphooxypent-2-enoate + H2O. It participates in isoprenoid biosynthesis; isopentenyl diphosphate biosynthesis via mevalonate pathway. Functionally, component of a hydro-lyase that catalyzes the dehydration of mevalonate 5-phosphate (MVA5P) to form trans-anhydromevalonate 5-phosphate (tAHMP). Involved in the archaeal mevalonate (MVA) pathway, which provides fundamental precursors for isoprenoid biosynthesis, such as isopentenyl diphosphate (IPP) and dimethylallyl diphosphate (DMAPP). This Pyrococcus horikoshii (strain ATCC 700860 / DSM 12428 / JCM 9974 / NBRC 100139 / OT-3) protein is Phosphomevalonate dehydratase small subunit.